Consider the following 256-residue polypeptide: Phosphonates import ATP-binding protein PhnC (256 aa).

The ABC transporter domain occupies 5-253; sequence LRITGLVKEY…MLKTIYGGES (249 aa). 38 to 45 is an ATP binding site; sequence GPSGTGKS.

This sequence belongs to the ABC transporter superfamily. Phosphonates importer (TC 3.A.1.9.1) family. In terms of assembly, the complex is composed of two ATP-binding proteins (PhnC), two transmembrane proteins (PhnE) and a solute-binding protein (PhnD).

The protein localises to the cell inner membrane. It catalyses the reaction phosphonate(out) + ATP + H2O = phosphonate(in) + ADP + phosphate + H(+). Functionally, part of the ABC transporter complex PhnCDE involved in phosphonates import. Responsible for energy coupling to the transport system. The polypeptide is Phosphonates import ATP-binding protein PhnC (Bordetella parapertussis (strain 12822 / ATCC BAA-587 / NCTC 13253)).